The chain runs to 585 residues: A-type ATP synthase subunit A (585 aa).

Residue 231 to 238 participates in ATP binding; the sequence is GPFGSGKT.

This sequence belongs to the ATPase alpha/beta chains family. In terms of assembly, has multiple subunits with at least A(3), B(3), C, D, E, F, H, I and proteolipid K(x).

Its subcellular location is the cell membrane. The enzyme catalyses ATP + H2O + 4 H(+)(in) = ADP + phosphate + 5 H(+)(out). Functionally, component of the A-type ATP synthase that produces ATP from ADP in the presence of a proton gradient across the membrane. The A chain is the catalytic subunit. The sequence is that of A-type ATP synthase subunit A from Thermococcus sibiricus (strain DSM 12597 / MM 739).